Reading from the N-terminus, the 576-residue chain is Colicin-E7 (576 aa).

3 disordered regions span residues 1-75, 421-478, and 506-557; these read MSGG…GGGS, SSAL…PVPD, and DPEL…GVYD. Over residues 19 to 35 the composition is skewed to gly residues; it reads NINGGPTGLGGNGGASD. Over residues 36 to 45 the composition is skewed to low complexity; the sequence is GSGWSSENNP. Positions 46-75 are enriched in gly residues; sequence WGGGSGSGVHWGGGSGHGNGGGNSNSGGGS. Composition is skewed to basic and acidic residues over residues 424–447 and 535–548; these read LERRKQKENKEKDAKAKLDKESKR and SGKRTSFELHHEKP. The Zn(2+) site is built by His544, His569, and His573.

The protein belongs to the colicin/pyosin nuclease family.

Its function is as follows. This plasmid-coded bactericidal protein is an endonuclease active on both single- and double-stranded DNA but with undefined specificity. Colicins are polypeptide toxins produced by and active against E.coli and closely related bacteria. This chain is Colicin-E7 (colE7), found in Escherichia coli.